The sequence spans 596 residues: Putative ankyrin repeat protein FPV024 (596 aa).

13 ANK repeats span residues 5-34 (KLRK…TFSN), 37-66 (ALST…DINK), 68-96 (KSPP…DIEK), 99-128 (LGNS…DPNT), 130-158 (FINY…SLNI), 162-191 (HFKT…SLTI), 195-225 (YNNH…PVNE), 229-258 (LERT…DPNI), 262-291 (CLGT…NVNI), 295-324 (TIDT…NTRL), 326-355 (SRNP…EVNI), 359-389 (EGYT…NPNM), and 394-423 (NENT…DVHS).

This chain is Putative ankyrin repeat protein FPV024, found in Fowlpox virus (strain NVSL) (FPV).